Reading from the N-terminus, the 632-residue chain is Sporulenol synthase (632 aa).

Aspartate 377 functions as the Proton donor in the catalytic mechanism. 3 PFTB repeats span residues 395–436 (WERG…EDAA), 465–505 (IQRA…HACG), and 513–554 (IQKA…VQTA).

It belongs to the terpene cyclase/mutase family.

The protein localises to the cell membrane. It catalyses the reaction sporulenol = (R)-tetraprenyl-beta-curcumene + H2O. The protein operates within secondary metabolite biosynthesis; hopanoid biosynthesis. In terms of biological role, catalyzes the cyclization of tetraprenyl beta-curcumene into sporulenol. The chain is Sporulenol synthase (sqhC) from Bacillus subtilis (strain 168).